The sequence spans 201 residues: Large ribosomal subunit protein uL4 (201 aa).

The disordered stretch occupies residues Ala-45 to Gly-66.

This sequence belongs to the universal ribosomal protein uL4 family. As to quaternary structure, part of the 50S ribosomal subunit.

Its function is as follows. One of the primary rRNA binding proteins, this protein initially binds near the 5'-end of the 23S rRNA. It is important during the early stages of 50S assembly. It makes multiple contacts with different domains of the 23S rRNA in the assembled 50S subunit and ribosome. Functionally, forms part of the polypeptide exit tunnel. In Baumannia cicadellinicola subsp. Homalodisca coagulata, this protein is Large ribosomal subunit protein uL4.